Here is a 375-residue protein sequence, read N- to C-terminus: MEGCETRGQLYYHPAYLFAIIFQGTSGYLTFPILFIILKKYAFKVYYHPNLVFLMMLNVVSCLLLGGLTAWSATNFFLNLMIKPSPCDLLLKTYFCSKIRGTFLFAFCLVTTSHAGILLERSWATYSVKNYERQGRALGTILAIVAVAVAATAIFILLLPEDGEEMITTCLTFSASKSIGSRVYVMFFVQLLLDAVISIVHLVLYRYNKNIDKHGSTSLSEQFQRNENVKTLKQVTPLLILSNVTIGVYIFIVSVFRLYKDYLPPNWYEIIAANLFIMPHMPFMFTSLILVELWLGKKRQDRIHKDMMASQDVPLDDQFHIAMENWDVHFQSRLKAQARANRKPLSANWTSSTLITKFKKRQTTVAVISIPPSPS.

7 helical membrane passes run 17 to 37, 51 to 71, 99 to 119, 138 to 158, 183 to 203, 236 to 256, and 275 to 295; these read LFAI…LFII, LVFL…LTAW, IRGT…GILL, LGTI…FILL, VYVM…VHLV, TPLL…VSVF, and LFIM…ELWL.

Belongs to the nematode receptor-like protein sra family.

Its subcellular location is the membrane. In Caenorhabditis elegans, this protein is Serpentine receptor class alpha-39 (sra-39).